Reading from the N-terminus, the 593-residue chain is Aspartate--tRNA ligase (593 aa).

Glu173 provides a ligand contact to L-aspartate. Positions 197-200 (QLFK) are aspartate. Arg219 contacts L-aspartate. Residues 219–221 (RDE) and Gln228 each bind ATP. His449 serves as a coordination point for L-aspartate. Glu483 lines the ATP pocket. Arg490 contacts L-aspartate. Residue 535–538 (GLDR) participates in ATP binding.

Belongs to the class-II aminoacyl-tRNA synthetase family. Type 1 subfamily. As to quaternary structure, homodimer.

It is found in the cytoplasm. It catalyses the reaction tRNA(Asp) + L-aspartate + ATP = L-aspartyl-tRNA(Asp) + AMP + diphosphate. Catalyzes the attachment of L-aspartate to tRNA(Asp) in a two-step reaction: L-aspartate is first activated by ATP to form Asp-AMP and then transferred to the acceptor end of tRNA(Asp). In Shewanella piezotolerans (strain WP3 / JCM 13877), this protein is Aspartate--tRNA ligase.